We begin with the raw amino-acid sequence, 555 residues long: MRSKKMTGGLEKAPHRSLLYALGLSKDEVNRPLIGICNAANEIIPGHVHLHTITRAVKDGVRLAGGVPMEFPAIGVCDGLAMNHTGMRYSLPSREIIADSIEIMATAHPFDALVLIPNCDKIVPGMLMAALRLNIPTIVISGGPMLAGRKDGKKVDLITVFEGVGQVKTGNMTEDELTVLEQSACPTCGSCSGMFTANSMNCLSETIGLALPGNGTIPAVMAERTRLAKAAGSQIMTLLEKDIKPRDIVTEKSLKNAVTMDMALGCSTNTVLHLPAIFNEAGLKLDLTVFDEISRNTPNLCKLSPAGPDHIEDLNAAGGIQGVMAELSKTGRIELDPMTVTGKTVGENLKELNAGVKDHKIVRPVDDPYSTEGGIAVLFGNIAEDGCVVKQSAVAPEMMKRTCNAKVFNSEEEAVEAILGNQIVKGDAVVILYEGPKGGPGMREMLTPTSAIAGMGLGADVALITDGRFSGGTRGAAIGHVSPEAASGGAIGLVQTGDVIEIDIPGRSINVKLDEAEMEKRRAEFKPIEKEMPSAFLKRYSQNVTSASTGAIYKK.

Asp-78 lines the Mg(2+) pocket. Cys-119 lines the [2Fe-2S] cluster pocket. Residues Asp-120 and Lys-121 each contribute to the Mg(2+) site. Lys-121 carries the post-translational modification N6-carboxylysine. Cys-191 serves as a coordination point for [2Fe-2S] cluster. Glu-444 provides a ligand contact to Mg(2+). Residue Ser-470 is the Proton acceptor of the active site.

The protein belongs to the IlvD/Edd family. As to quaternary structure, homodimer. [2Fe-2S] cluster serves as cofactor. It depends on Mg(2+) as a cofactor.

The enzyme catalyses (2R)-2,3-dihydroxy-3-methylbutanoate = 3-methyl-2-oxobutanoate + H2O. It catalyses the reaction (2R,3R)-2,3-dihydroxy-3-methylpentanoate = (S)-3-methyl-2-oxopentanoate + H2O. The protein operates within amino-acid biosynthesis; L-isoleucine biosynthesis; L-isoleucine from 2-oxobutanoate: step 3/4. It participates in amino-acid biosynthesis; L-valine biosynthesis; L-valine from pyruvate: step 3/4. In terms of biological role, functions in the biosynthesis of branched-chain amino acids. Catalyzes the dehydration of (2R,3R)-2,3-dihydroxy-3-methylpentanoate (2,3-dihydroxy-3-methylvalerate) into 2-oxo-3-methylpentanoate (2-oxo-3-methylvalerate) and of (2R)-2,3-dihydroxy-3-methylbutanoate (2,3-dihydroxyisovalerate) into 2-oxo-3-methylbutanoate (2-oxoisovalerate), the penultimate precursor to L-isoleucine and L-valine, respectively. The protein is Dihydroxy-acid dehydratase of Maridesulfovibrio salexigens (strain ATCC 14822 / DSM 2638 / NCIMB 8403 / VKM B-1763) (Desulfovibrio salexigens).